The primary structure comprises 313 residues: Ribosomal RNA small subunit methyltransferase H (313 aa).

Residues 35–37 (GGH), D55, F79, D101, and Q108 contribute to the S-adenosyl-L-methionine site.

It belongs to the methyltransferase superfamily. RsmH family.

The protein resides in the cytoplasm. It carries out the reaction cytidine(1402) in 16S rRNA + S-adenosyl-L-methionine = N(4)-methylcytidine(1402) in 16S rRNA + S-adenosyl-L-homocysteine + H(+). Specifically methylates the N4 position of cytidine in position 1402 (C1402) of 16S rRNA. The protein is Ribosomal RNA small subunit methyltransferase H of Klebsiella pneumoniae (strain 342).